The primary structure comprises 300 residues: NAD kinase (300 aa).

D75 acts as the Proton acceptor in catalysis. NAD(+) is bound by residues 75–76 (DG), 149–150 (ND), R177, D179, 190–195 (TAYALS), A214, and Q248.

This sequence belongs to the NAD kinase family. A divalent metal cation is required as a cofactor.

Its subcellular location is the cytoplasm. It catalyses the reaction NAD(+) + ATP = ADP + NADP(+) + H(+). Its function is as follows. Involved in the regulation of the intracellular balance of NAD and NADP, and is a key enzyme in the biosynthesis of NADP. Catalyzes specifically the phosphorylation on 2'-hydroxyl of the adenosine moiety of NAD to yield NADP. The polypeptide is NAD kinase (Burkholderia cenocepacia (strain HI2424)).